A 263-amino-acid polypeptide reads, in one-letter code: Metaxin-2 (263 aa).

Position 2 is an N-acetylserine (Ser2).

This sequence belongs to the metaxin family. In terms of assembly, interacts with MTX1/metaxin-1. Associates with the mitochondrial contact site and cristae organizing system (MICOS) complex, composed of at least MICOS10/MIC10, CHCHD3/MIC19, CHCHD6/MIC25, APOOL/MIC27, IMMT/MIC60, APOO/MIC23/MIC26 and QIL1/MIC13. This complex was also known under the names MINOS or MitOS complex. The MICOS complex associates with mitochondrial outer membrane proteins SAMM50, MTX1 and MTX2 (together described as components of the mitochondrial outer membrane sorting assembly machinery (SAM) complex) and DNAJC11, mitochondrial inner membrane protein TMEM11 and with HSPA9. The MICOS and SAM complexes together with DNAJC11 are part of a large protein complex spanning both membranes termed the mitochondrial intermembrane space bridging (MIB) complex.

The protein resides in the mitochondrion outer membrane. The protein localises to the mitochondrion. Functionally, involved in transport of proteins into the mitochondrion. This chain is Metaxin-2 (MTX2), found in Homo sapiens (Human).